Reading from the N-terminus, the 310-residue chain is MEKVLVFGHKNPDTDAICSAIAYAELKKELGMNAEPVRLGEISGETQFALDYFKVEGPRFVETVANEVDNVILVDHNERQQSANDIESVRVLEVIDHHRIANFETSDPLYYRCEPVGCTATILNKMYKENGVAIRKEIAGLMLSAIISDSLLFKSPTCTEQDVAAARELAEIAGVDAESYGLEMLKAGADLSGKTMEQLISLDAKEFQMGNAKVEIAQVNAVDTNDVLVHQAELEKVISAVVEEKGLDLFLFVVTDILTNDSVGLAIGKAANAVEKAYNVTLENNTATLKGVVSRKKQIVPVLTETFQAL.

6 residues coordinate Mn(2+): His-9, Asp-13, Asp-15, Asp-75, His-97, and Asp-149.

This sequence belongs to the PPase class C family. It depends on Mn(2+) as a cofactor.

The protein localises to the cytoplasm. The catalysed reaction is diphosphate + H2O = 2 phosphate + H(+). This chain is Probable manganese-dependent inorganic pyrophosphatase, found in Bacillus cytotoxicus (strain DSM 22905 / CIP 110041 / 391-98 / NVH 391-98).